We begin with the raw amino-acid sequence, 390 residues long: Phosphopentomutase (390 aa).

6 residues coordinate Mn(2+): aspartate 11, aspartate 283, histidine 288, aspartate 324, histidine 325, and histidine 336.

Belongs to the phosphopentomutase family. Requires Mn(2+) as cofactor.

The protein resides in the cytoplasm. The catalysed reaction is 2-deoxy-alpha-D-ribose 1-phosphate = 2-deoxy-D-ribose 5-phosphate. It catalyses the reaction alpha-D-ribose 1-phosphate = D-ribose 5-phosphate. It participates in carbohydrate degradation; 2-deoxy-D-ribose 1-phosphate degradation; D-glyceraldehyde 3-phosphate and acetaldehyde from 2-deoxy-alpha-D-ribose 1-phosphate: step 1/2. Isomerase that catalyzes the conversion of deoxy-ribose 1-phosphate (dRib-1-P) and ribose 1-phosphate (Rib-1-P) to deoxy-ribose 5-phosphate (dRib-5-P) and ribose 5-phosphate (Rib-5-P), respectively. This is Phosphopentomutase from Clostridium acetobutylicum (strain ATCC 824 / DSM 792 / JCM 1419 / IAM 19013 / LMG 5710 / NBRC 13948 / NRRL B-527 / VKM B-1787 / 2291 / W).